A 161-amino-acid chain; its full sequence is Ribonuclease H (161 aa).

Residues 12 to 155 (QPQHVVIYTD…ADALANKGVE (144 aa)) form the RNase H type-1 domain. Residues Asp-21, Glu-59, Asp-81, and Asp-147 each coordinate Mg(2+).

Belongs to the RNase H family. Monomer. Mg(2+) is required as a cofactor.

It is found in the cytoplasm. It carries out the reaction Endonucleolytic cleavage to 5'-phosphomonoester.. Functionally, endonuclease that specifically degrades the RNA of RNA-DNA hybrids. The polypeptide is Ribonuclease H (Polaromonas naphthalenivorans (strain CJ2)).